Here is a 195-residue protein sequence, read N- to C-terminus: Dephospho-CoA kinase (195 aa).

The 192-residue stretch at 4–195 (IIGLTGGIAS…EQILDALQRL (192 aa)) folds into the DPCK domain. 12 to 17 (ASGKST) is a binding site for ATP.

The protein belongs to the CoaE family.

It is found in the cytoplasm. It catalyses the reaction 3'-dephospho-CoA + ATP = ADP + CoA + H(+). It participates in cofactor biosynthesis; coenzyme A biosynthesis; CoA from (R)-pantothenate: step 5/5. Functionally, catalyzes the phosphorylation of the 3'-hydroxyl group of dephosphocoenzyme A to form coenzyme A. The protein is Dephospho-CoA kinase of Streptococcus agalactiae serotype Ia (strain ATCC 27591 / A909 / CDC SS700).